The chain runs to 156 residues: Small ribosomal subunit protein uS7 (156 aa).

This sequence belongs to the universal ribosomal protein uS7 family. As to quaternary structure, part of the 30S ribosomal subunit. Contacts proteins S9 and S11.

One of the primary rRNA binding proteins, it binds directly to 16S rRNA where it nucleates assembly of the head domain of the 30S subunit. Is located at the subunit interface close to the decoding center, probably blocks exit of the E-site tRNA. The polypeptide is Small ribosomal subunit protein uS7 (Saccharophagus degradans (strain 2-40 / ATCC 43961 / DSM 17024)).